Consider the following 489-residue polypeptide: MTHPVPIQFQSPDLEAIASSAGRIVVFAGEGGAMGVAAKRVNRLMRGALERAAASEAFGKLKQGEAMELGFPAGMAADAVQLVKLDRRCDVATARKAGGAIGRSLSKAGTLVLADTIQRAAEVSFGIALRAYDFTPHKTGEKTVPGPVTMMVANPETVAAEAGPMAALAEGIFFTRDLVNEPANVLSTFDFAARLAAMHELGLEVEILEEEDMEKLGMRALLGVGQGSEHPSKLVVMQWKGGPEDQVPLALVGKGVVFDTGGISIKPAAGMEDMTMDMGGAAVVAGVMRTLAMRKARANVVGLVGIVENMPDGNAQRPGDVVRSMKGDTIEVINTDAEGRLVLADVLWYAQERFNPRGVIDLATLTGAIIVALGHENTGVFSNDDAFCAAFLKAAQSEGEGAWRMPMGERYDEMLKSRIADMRNSTGREAGSITAAHFLRRFVKPETPWIHLDIAGTALLKGDTALAPKGATGWGVLSLDRLIRDMLEK.

Mn(2+) contacts are provided by lysine 254 and aspartate 259. Lysine 266 is a catalytic residue. Residues aspartate 277, aspartate 336, and glutamate 338 each coordinate Mn(2+). Arginine 340 is an active-site residue.

This sequence belongs to the peptidase M17 family. The cofactor is Mn(2+).

It localises to the cytoplasm. It catalyses the reaction Release of an N-terminal amino acid, Xaa-|-Yaa-, in which Xaa is preferably Leu, but may be other amino acids including Pro although not Arg or Lys, and Yaa may be Pro. Amino acid amides and methyl esters are also readily hydrolyzed, but rates on arylamides are exceedingly low.. The catalysed reaction is Release of an N-terminal amino acid, preferentially leucine, but not glutamic or aspartic acids.. Its function is as follows. Presumably involved in the processing and regular turnover of intracellular proteins. Catalyzes the removal of unsubstituted N-terminal amino acids from various peptides. In Cereibacter sphaeroides (strain ATCC 17025 / ATH 2.4.3) (Rhodobacter sphaeroides), this protein is Probable cytosol aminopeptidase.